The primary structure comprises 548 residues: Lysine--tRNA ligase (548 aa).

Positions Pro-52 to Thr-60 match the 'HIGH' region motif. The short motif at Lys-300–Ser-304 is the 'KMSKS' region element. ATP is bound at residue Lys-303.

This sequence belongs to the class-I aminoacyl-tRNA synthetase family.

The protein localises to the cytoplasm. The catalysed reaction is tRNA(Lys) + L-lysine + ATP = L-lysyl-tRNA(Lys) + AMP + diphosphate. This Mesorhizobium japonicum (strain LMG 29417 / CECT 9101 / MAFF 303099) (Mesorhizobium loti (strain MAFF 303099)) protein is Lysine--tRNA ligase.